Here is a 186-residue protein sequence, read N- to C-terminus: Ribosome-recycling factor (186 aa).

This sequence belongs to the RRF family.

It localises to the cytoplasm. Functionally, responsible for the release of ribosomes from messenger RNA at the termination of protein biosynthesis. May increase the efficiency of translation by recycling ribosomes from one round of translation to another. This Pelodictyon phaeoclathratiforme (strain DSM 5477 / BU-1) protein is Ribosome-recycling factor.